The sequence spans 154 residues: Anti-sigma-E factor RseA (154 aa).

Phosphothreonine; by PknB is present on T39. Zn(2+) is bound by residues H66, C70, and C73. A disordered region spans residues 104–154; sequence SEIPRCPPEGPSKGSSGGSSQGPPDGAAAGFGDRFADGDGGNRGRQSRVRR. Positions 124–136 are enriched in low complexity; the sequence is QGPPDGAAAGFGD.

This sequence belongs to the zinc-associated anti-sigma factor (ZAS) superfamily. In terms of assembly, interacts with cognate ECF RNA polymerase sigma factor SigE under reducing conditions; this inhibits the interaction of SigE with the RNA polymerase catalytic core. Requires Zn(2+) as cofactor. Post-translationally, phosphorylated by PknB on Thr-39; can be dephosphorylated (at least in vitro) by PstP. Phosphorylation is the signal for subsequent degradation by the ClpC1-ClpP2 complex. In terms of processing, degraded following vancomycin treatment (surface stress) by a ClpC1-ClpP2 complex.

Its subcellular location is the cytoplasm. Its function is as follows. An anti-sigma factor for extracytoplasmic function (ECF) sigma factor SigE. ECF sigma factors are held in an inactive form by an anti-sigma factor. The sequence is that of Anti-sigma-E factor RseA (rseA) from Mycobacterium tuberculosis (strain ATCC 25618 / H37Rv).